We begin with the raw amino-acid sequence, 341 residues long: Uroporphyrinogen decarboxylase (341 aa).

Residues 25–29 (RQAGR), Phe44, Asp74, Tyr151, Ser206, and His318 each bind substrate.

It belongs to the uroporphyrinogen decarboxylase family. In terms of assembly, homodimer.

It is found in the cytoplasm. The catalysed reaction is uroporphyrinogen III + 4 H(+) = coproporphyrinogen III + 4 CO2. The protein operates within porphyrin-containing compound metabolism; protoporphyrin-IX biosynthesis; coproporphyrinogen-III from 5-aminolevulinate: step 4/4. In terms of biological role, catalyzes the decarboxylation of four acetate groups of uroporphyrinogen-III to yield coproporphyrinogen-III. The chain is Uroporphyrinogen decarboxylase from Christiangramia forsetii (strain DSM 17595 / CGMCC 1.15422 / KT0803) (Gramella forsetii).